A 736-amino-acid polypeptide reads, in one-letter code: MSAPEPKITPELIASHGLKPDEYQRILDLIGREPTFTELGIFSAMWNEHCSYKSSRIHLKGLPTKAPWVLQGPGENAGVIDIGDNQAVVFKMESHNHPSYIEPYQGATTGVGGILRDVFTMGARPIACLNALSFGDPSHPKTRHLVSGVVAGVGGYGNSFGVPTVGGQTRFHTRYDGNILVNAMAVGLADSDKIFLAAASGVGMPIVYLGSKTGRDGMGGATMASAEFDEGSEEKRPTVQVGDPFAEKLLLEACLEIMAKDCVIAIQDMGAAGLTCSAVEMGAKGDLGVDLDLDAVPTRETGMTAYEMMLSESQERMLMVLKPEKEKEAEEIFRKWGLDFAIVGYTTPTKRFVVKHGGAVKADLPIKELGDEAPLYDRPHVPSPKLPVIHAREVNAPMPVPEALEKLLATPDLCSKRWVWEQYDHVIGGNTLQRPGGDAAVVRVEDGPKGLALTVDVTPRYCEADPYEGGKQAVAEAYRNITAVGGKPLAITDNLNFGNPERPEIMGQLVGCLKGISEACIALDSPIVSGNVSLYNETSGRGILPTPSIGGVGLLDDFTKSATLAFKAEGEAILLIGETHGWLGQSVYLRDVCGREEGAPPPVDLACEKRHGDVVRGMIHAGTATAVHDLSDGGLLVALAEMAISGNIGASLDAPPDSTVAHAWWFGEDQGRYLVTVKEDDLLTVLSKLKSVGVPCTQIGTTGGHTLKIDGERAIDVKALRHAHEHWLPDYMAGKN.

Residue His-49 is part of the active site. The ATP site is built by Tyr-52 and Lys-91. Glu-93 is a Mg(2+) binding site. Substrate contacts are provided by residues 94 to 97 and Arg-116; that span reads SHNH. Catalysis depends on His-95, which acts as the Proton acceptor. Asp-117 is a Mg(2+) binding site. Gln-240 serves as a coordination point for substrate. Residue Asp-268 participates in Mg(2+) binding. 312-314 contacts substrate; sequence ESQ. Asp-493 and Gly-530 together coordinate ATP. Asn-531 is a binding site for Mg(2+). Ser-533 is a binding site for substrate.

It belongs to the FGAMS family. In terms of assembly, monomer. Part of the FGAM synthase complex composed of 1 PurL, 1 PurQ and 2 PurS subunits.

Its subcellular location is the cytoplasm. It catalyses the reaction N(2)-formyl-N(1)-(5-phospho-beta-D-ribosyl)glycinamide + L-glutamine + ATP + H2O = 2-formamido-N(1)-(5-O-phospho-beta-D-ribosyl)acetamidine + L-glutamate + ADP + phosphate + H(+). It functions in the pathway purine metabolism; IMP biosynthesis via de novo pathway; 5-amino-1-(5-phospho-D-ribosyl)imidazole from N(2)-formyl-N(1)-(5-phospho-D-ribosyl)glycinamide: step 1/2. In terms of biological role, part of the phosphoribosylformylglycinamidine synthase complex involved in the purines biosynthetic pathway. Catalyzes the ATP-dependent conversion of formylglycinamide ribonucleotide (FGAR) and glutamine to yield formylglycinamidine ribonucleotide (FGAM) and glutamate. The FGAM synthase complex is composed of three subunits. PurQ produces an ammonia molecule by converting glutamine to glutamate. PurL transfers the ammonia molecule to FGAR to form FGAM in an ATP-dependent manner. PurS interacts with PurQ and PurL and is thought to assist in the transfer of the ammonia molecule from PurQ to PurL. The polypeptide is Phosphoribosylformylglycinamidine synthase subunit PurL (Rhodopseudomonas palustris (strain HaA2)).